The following is a 65-amino-acid chain: Large ribosomal subunit protein bL35 (65 aa).

This sequence belongs to the bacterial ribosomal protein bL35 family.

The sequence is that of Large ribosomal subunit protein bL35 from Ruminiclostridium cellulolyticum (strain ATCC 35319 / DSM 5812 / JCM 6584 / H10) (Clostridium cellulolyticum).